The sequence spans 343 residues: Holliday junction branch migration complex subunit RuvB (343 aa).

The tract at residues 1 to 186 is large ATPase domain (RuvB-L); it reads MVMARKSDTL…FQIQERLEYY (186 aa). ATP-binding positions include Leu25, Arg26, Gly67, Lys70, Thr71, Ser72, 133 to 135, Arg176, Tyr186, and Arg223; that span reads EDF. Thr71 contacts Mg(2+). The small ATPAse domain (RuvB-S) stretch occupies residues 187–257; it reads DAKALESILH…LAQKSLDRLG (71 aa). The tract at residues 260–343 is head domain (RuvB-H); sequence ASGLDSMDRK…PPPTPQGSLF (84 aa). Residues Arg296, Arg315, and Arg320 each contribute to the DNA site.

Belongs to the RuvB family. Homohexamer. Forms an RuvA(8)-RuvB(12)-Holliday junction (HJ) complex. HJ DNA is sandwiched between 2 RuvA tetramers; dsDNA enters through RuvA and exits via RuvB. An RuvB hexamer assembles on each DNA strand where it exits the tetramer. Each RuvB hexamer is contacted by two RuvA subunits (via domain III) on 2 adjacent RuvB subunits; this complex drives branch migration. In the full resolvosome a probable DNA-RuvA(4)-RuvB(12)-RuvC(2) complex forms which resolves the HJ.

Its subcellular location is the cytoplasm. It carries out the reaction ATP + H2O = ADP + phosphate + H(+). The RuvA-RuvB-RuvC complex processes Holliday junction (HJ) DNA during genetic recombination and DNA repair, while the RuvA-RuvB complex plays an important role in the rescue of blocked DNA replication forks via replication fork reversal (RFR). RuvA specifically binds to HJ cruciform DNA, conferring on it an open structure. The RuvB hexamer acts as an ATP-dependent pump, pulling dsDNA into and through the RuvAB complex. RuvB forms 2 homohexamers on either side of HJ DNA bound by 1 or 2 RuvA tetramers; 4 subunits per hexamer contact DNA at a time. Coordinated motions by a converter formed by DNA-disengaged RuvB subunits stimulates ATP hydrolysis and nucleotide exchange. Immobilization of the converter enables RuvB to convert the ATP-contained energy into a lever motion, pulling 2 nucleotides of DNA out of the RuvA tetramer per ATP hydrolyzed, thus driving DNA branch migration. The RuvB motors rotate together with the DNA substrate, which together with the progressing nucleotide cycle form the mechanistic basis for DNA recombination by continuous HJ branch migration. Branch migration allows RuvC to scan DNA until it finds its consensus sequence, where it cleaves and resolves cruciform DNA. This is Holliday junction branch migration complex subunit RuvB from Myxococcus xanthus (strain DK1622).